The following is a 124-amino-acid chain: Fluoride-specific ion channel FluC (124 aa).

A run of 4 helical transmembrane segments spans residues 5–25, 37–57, 69–89, and 99–119; these read ILAV…AGTW, ATLA…GLFL, GLIV…LDTL, and LALG…WAGL. The Na(+) site is built by Gly76 and Thr79.

It belongs to the fluoride channel Fluc/FEX (TC 1.A.43) family.

It localises to the cell inner membrane. The enzyme catalyses fluoride(in) = fluoride(out). Its activity is regulated as follows. Na(+) is not transported, but it plays an essential structural role and its presence is essential for fluoride channel function. Functionally, fluoride-specific ion channel. Important for reducing fluoride concentration in the cell, thus reducing its toxicity. The chain is Fluoride-specific ion channel FluC from Pseudomonas syringae pv. tomato (strain ATCC BAA-871 / DC3000).